A 140-amino-acid polypeptide reads, in one-letter code: Small ribosomal subunit protein uS12 (140 aa).

D103 is modified (3-methylthioaspartic acid). Residues 120–140 (GVQKRMQARSKYGAKRPKKGK) are disordered. A compositionally biased stretch (basic residues) spans 125–140 (MQARSKYGAKRPKKGK).

Belongs to the universal ribosomal protein uS12 family. In terms of assembly, part of the 30S ribosomal subunit. Contacts proteins S8 and S17. May interact with IF1 in the 30S initiation complex.

Functionally, with S4 and S5 plays an important role in translational accuracy. In terms of biological role, interacts with and stabilizes bases of the 16S rRNA that are involved in tRNA selection in the A site and with the mRNA backbone. Located at the interface of the 30S and 50S subunits, it traverses the body of the 30S subunit contacting proteins on the other side and probably holding the rRNA structure together. The combined cluster of proteins S8, S12 and S17 appears to hold together the shoulder and platform of the 30S subunit. This Desulfitobacterium hafniense (strain Y51) protein is Small ribosomal subunit protein uS12.